The chain runs to 657 residues: Katanin p80 WD40 repeat-containing subunit B1 (657 aa).

WD repeat units follow at residues 18–58 (AHSS…CVMS), 61–100 (GHTTPIESLQISAKEELIVAGSQSGSIRVWDLEAAKILRT), 103–142 (GHKANICSLDFHPYGSFVASGSLDTDIKLWDVRRKGCIFK), 145–184 (SHTQAVRCLRFSPDGKWLASAADDHTVKLWDLTAGKVMFE), 187–226 (GHSGPVNVVEFHPSEYLLASGSSDRTIRFWDLEKFHVVSC), and 229–269 (EEAT…DVVV). 2 disordered regions span residues 318-410 (NNEL…EDEP) and 423-454 (VEVQTPLPKQELPETFQRPPIASSTPMPRAEP). A compositionally biased stretch (polar residues) spans 325-345 (PTPTGSSLRRSYDRPSTSCSK). The span at 351-385 (HSSESERRSPSSEEDRDEKESKAEIQNPEDYKEIF) shows a compositional bias: basic and acidic residues.

The protein belongs to the WD repeat KATNB1 family. Interacts with KATNA1. This interaction enhances the microtubule binding and severing activity of KATNA1 and also targets this activity to the centrosome.

Its subcellular location is the cytoplasm. The protein localises to the cytoskeleton. It is found in the microtubule organizing center. The protein resides in the centrosome. It localises to the spindle pole. Its subcellular location is the spindle. Participates in a complex which severs microtubules in an ATP-dependent manner. May act to target the enzymatic subunit of this complex to sites of action such as the centrosome. Microtubule severing may promote rapid reorganization of cellular microtubule arrays and the release of microtubules from the centrosome following nucleation. In Gallus gallus (Chicken), this protein is Katanin p80 WD40 repeat-containing subunit B1.